The sequence spans 211 residues: Thiamine-phosphate synthase (211 aa).

4-amino-2-methyl-5-(diphosphooxymethyl)pyrimidine contacts are provided by residues 36 to 40 (QLREK) and asparagine 68. 2 residues coordinate Mg(2+): aspartate 69 and aspartate 88. Serine 107 provides a ligand contact to 4-amino-2-methyl-5-(diphosphooxymethyl)pyrimidine. 133 to 135 (TGS) is a binding site for 2-[(2R,5Z)-2-carboxy-4-methylthiazol-5(2H)-ylidene]ethyl phosphate. Lysine 136 serves as a coordination point for 4-amino-2-methyl-5-(diphosphooxymethyl)pyrimidine. Residues glycine 167 and 187 to 188 (IT) contribute to the 2-[(2R,5Z)-2-carboxy-4-methylthiazol-5(2H)-ylidene]ethyl phosphate site.

It belongs to the thiamine-phosphate synthase family. The cofactor is Mg(2+).

It catalyses the reaction 2-[(2R,5Z)-2-carboxy-4-methylthiazol-5(2H)-ylidene]ethyl phosphate + 4-amino-2-methyl-5-(diphosphooxymethyl)pyrimidine + 2 H(+) = thiamine phosphate + CO2 + diphosphate. The catalysed reaction is 2-(2-carboxy-4-methylthiazol-5-yl)ethyl phosphate + 4-amino-2-methyl-5-(diphosphooxymethyl)pyrimidine + 2 H(+) = thiamine phosphate + CO2 + diphosphate. It carries out the reaction 4-methyl-5-(2-phosphooxyethyl)-thiazole + 4-amino-2-methyl-5-(diphosphooxymethyl)pyrimidine + H(+) = thiamine phosphate + diphosphate. Its pathway is cofactor biosynthesis; thiamine diphosphate biosynthesis; thiamine phosphate from 4-amino-2-methyl-5-diphosphomethylpyrimidine and 4-methyl-5-(2-phosphoethyl)-thiazole: step 1/1. In terms of biological role, condenses 4-methyl-5-(beta-hydroxyethyl)thiazole monophosphate (THZ-P) and 2-methyl-4-amino-5-hydroxymethyl pyrimidine pyrophosphate (HMP-PP) to form thiamine monophosphate (TMP). The chain is Thiamine-phosphate synthase from Haloarcula marismortui (strain ATCC 43049 / DSM 3752 / JCM 8966 / VKM B-1809) (Halobacterium marismortui).